The following is a 222-amino-acid chain: Collectrin (222 aa).

Positions 1–14 (MLWLLFFLVTAIHA) are cleaved as a signal peptide. Residues 15–141 (DLCRPDAENA…LAPPTDPSVP (127 aa)) lie on the Extracellular side of the membrane. Residues 21–222 (AENAFKVRLS…VTEDERLTPL (202 aa)) form the Collectrin-like domain. N-linked (GlcNAc...) asparagine glycans are attached at residues asparagine 76 and asparagine 93. Residues 142-162 (IWIIIFGVIFCIVLVATMLLI) form a helical membrane-spanning segment. Topologically, residues 163-222 (ISGIRQHRRKNKGPSEMEDSEDKCENVITIENGIPCDPLDMKGGHINDAFVTEDERLTPL) are cytoplasmic. A phosphothreonine mark is found at threonine 214 and threonine 220.

This sequence belongs to the CLTRN family. In terms of assembly, monomer. Homodimer; dimerization prevents CLTRN cleavage by BACE2. Interacts with SLC6A18; this interaction regulates the trafficking of SLC6A18 to the cell membrane and its amino acid transporter activity. Interacts with SLC6A19; this interaction regulates the trafficking of SLC6A19 to the cell membrane and its amino acid transporter activity. Interacts with SNAPIN. Glycosylated. Glycosylation is required for plasma membrane localization and for its cleavage by BACE2. In terms of processing, proteolytically processed in pancreatic beta cells by BACE2 leading to the generation and extracellular release of soluble CLTRN, and a corresponding cell-associated C-terminal fragment which is later cleaved by gamma-secretase. This shedding process inactivates CLTRN. Three cleavage sites have been identified for BACE2, two clustered sites after Phe-116 and Leu-118 and a more membrane proximal site at Phe-125; the preferred BACE2 cleavage site seems to be between Phe-125 and Leu-126, Phe-116 and Leu-118 act as alternative sites.

It localises to the cell membrane. Plays an important role in amino acid transport by acting as binding partner of amino acid transporters SLC6A18 and SLC6A19, regulating their trafficking on the cell surface and their activity. May also play a role in trafficking of amino acid transporters SLC3A1 and SLC7A9 to the renal cortical cell membrane. Regulator of SNARE complex function. Stimulator of beta cell replication. The sequence is that of Collectrin (CLTRN) from Bos taurus (Bovine).